Reading from the N-terminus, the 199-residue chain is Recombination protein RecR (199 aa).

Residues 58 to 73 form a C4-type zinc finger; that stretch reads CQRCNNFSEEAVCQRC. Residues 81 to 176 form the Toprim domain; it reads ATLCVVEMPA…KVSRISRGVP (96 aa).

It belongs to the RecR family.

In terms of biological role, may play a role in DNA repair. It seems to be involved in an RecBC-independent recombinational process of DNA repair. It may act with RecF and RecO. The chain is Recombination protein RecR from Azoarcus sp. (strain BH72).